Reading from the N-terminus, the 262-residue chain is Oxidoreductase GME11367 (262 aa).

It belongs to the avfA family.

It participates in secondary metabolite biosynthesis. Its function is as follows. Oxidoreductase; part of the gene cluster that mediates the biosynthesis of dibenzodioxocinones such as pestalotiollide B, a novel class of inhibitors against cholesterol ester transfer protein (CEPT). The biosynthesis initiates from condensation of acetate and malonate units catalyzed by the non-reducing PKS pks8/GME11356. Pks8/GME11356 lacks a thioesterase (TE) domain, which is important to the cyclizing of the third ring of atrochrysone carboxylic acid, and the esterase GME11355 might play the role of TE and catalyzes the cyclization reaction of the C ring. The lactamase-like protein GME11357 (or other beta-lactamases in Pestalotiopsis microspora) probably hydrolyzes the thioester bond between the ACP of pks8/GME11356 and the intermediate to release atrochrysone carboxylic acid, which is spontaneously dehydrates to form endocrocin anthrone. Endocrocin anthrone is further converted to emodin via the endocrocin intermediate. Emodin is then oxidized by several enzymes such as the Baeyer-Villiger oxidase GME11358, the oxidoreductase GME11367, the short chain dehydrogenase/reductase GME11373, as well as by other oxidoreductases from the cluster, to modify the A and C rings and open the B ring, and finally yield monodictyphenone. The prenyltransferase GME11375 may catalyze the addition reaction between the C5 side chains and the carbon bone of dibenzodioxocinones. The remaining biochemical reactions to the final product dibenzodioxocinones should be methylation catalyzed by methyltransferase GME11366 and reduction and lactonization reaction catalyzed by a series of oxidordeuctases. This is Oxidoreductase GME11367 from Pestalotiopsis microspora.